A 276-amino-acid chain; its full sequence is Putative aliphatic sulfonates transport permease protein SsuC (276 aa).

Helical transmembrane passes span 32 to 52 (GLLLPAVIIAIWQVIGGLGVV), 54 to 74 (ATVLPTPVTIVLTFKELILSG), 87 to 107 (AALGFLLGAGLGLMIGILAGF), 119 to 141 (LQMLRTVPHLAVTPLFILWFGFD), 146 to 168 (ILLIALGAFFPVYINTFNGIRGV), 199 to 219 (ILLGIRLSLGIAWLGLVVAEL), and 242 to 262 (VFAGIIIFAVVGKLTDSFVRL). In terms of domain architecture, ABC transmembrane type-1 spans 80-260 (LQISIYRAAL…VVGKLTDSFV (181 aa)).

It belongs to the binding-protein-dependent transport system permease family. CysTW subfamily.

The protein localises to the cell membrane. Part of a binding-protein-dependent transport system for aliphatic sulfonates. Probably responsible for the translocation of the substrate across the membrane. The sequence is that of Putative aliphatic sulfonates transport permease protein SsuC (ssuC) from Bacillus subtilis (strain 168).